The following is a 474-amino-acid chain: Selection and upkeep of intraepithelial T-cells protein 4 (474 aa).

The first 25 residues, 1–25, serve as a signal peptide directing secretion; it reads MGATEVLTSYCVVLCLLQMVALSSG. The Extracellular portion of the chain corresponds to 26–241; sequence HFTVIGSQRP…VLSGELFSWK (216 aa). The Ig-like V-type domain maps to 27 to 140; sequence FTVIGSQRPI…EEHITEVKVT (114 aa). 2 cysteine pairs are disulfide-bonded: Cys-48/Cys-122 and Cys-162/Cys-216. N-linked (GlcNAc...) asparagine glycosylation is found at Asn-111 and Asn-199. The 94-residue stretch at 141–234 folds into the Ig-like C1-type domain; it reads ATSSDIQILM…QEQSINIVLS (94 aa). A helical membrane pass occupies residues 242–262; sequence IVWIMILSTISFVMIDFCMTY. Over 263-298 the chain is Cytoplasmic; it reads CVQQQLIHEESLSTVDNDQCESDQSEGTCYKRNYPW. Residues 299–319 traverse the membrane as a helical segment; it reads IIIAVVPIISVFAIIGVMLFL. At 320–341 the chain is on the extracellular side; that stretch reads HLEQRVTILEQHFELDTLWLED. A helical transmembrane segment spans residues 342 to 362; the sequence is ISVILCVVIVSNINLIPLIYF. The Cytoplasmic portion of the chain corresponds to 363-381; that stretch reads RLHEHVPRFKDRSPILNKA. Residues 382 to 402 traverse the membrane as a helical segment; the sequence is VVFLHFIYFSIVCGTILLVHL. Residues 403-420 are Extracellular-facing; the sequence is QLRNKVSISDSLFSLYNS. The helical transmembrane segment at 421-441 threads the bilayer; the sequence is WLTDISMILGFLLSIFIVTTI. Over 442-474 the chain is Cytoplasmic; the sequence is AKSSLFNKKWCIGLCIHMKEAEATGGPCEGEEL.

The protein belongs to the SKINT family. Expressed in skin, thymus and, to a lower extent, bladder and testis.

The protein resides in the membrane. May act by engaging a cell surface molecule on immature T-cells in the embryonic thymus. The protein is Selection and upkeep of intraepithelial T-cells protein 4 (Skint4) of Mus musculus (Mouse).